Here is a 47-residue protein sequence, read N- to C-terminus: Photosystem II reaction center protein K (47 aa).

Residues 1–10 (MNIGFDMILA) constitute a propeptide that is removed on maturation. The chain crosses the membrane as a helical span at residues 22–42 (LVDVLPVIPLLFLLLAFVWQA).

The protein belongs to the PsbK family. In terms of assembly, PSII is composed of 1 copy each of membrane proteins PsbA, PsbB, PsbC, PsbD, PsbE, PsbF, PsbH, PsbI, PsbJ, PsbK, PsbL, PsbM, PsbT, PsbX, PsbY, PsbZ, Psb30/Ycf12, at least 3 peripheral proteins of the oxygen-evolving complex and a large number of cofactors. It forms dimeric complexes.

It is found in the plastid. Its subcellular location is the chloroplast thylakoid membrane. One of the components of the core complex of photosystem II (PSII). PSII is a light-driven water:plastoquinone oxidoreductase that uses light energy to abstract electrons from H(2)O, generating O(2) and a proton gradient subsequently used for ATP formation. It consists of a core antenna complex that captures photons, and an electron transfer chain that converts photonic excitation into a charge separation. The sequence is that of Photosystem II reaction center protein K from Mesostigma viride (Green alga).